Reading from the N-terminus, the 495-residue chain is UDP-glycosyltransferase 73C10 (495 aa).

His-24 (proton acceptor) is an active-site residue. Residue His-24 participates in an anthocyanidin binding. Asp-129 functions as the Charge relay in the catalytic mechanism. UDP-alpha-D-glucose contacts are provided by Gln-358, His-373, Trp-376, Asn-377, Ser-378, and Glu-381. Gly-396 contacts an anthocyanidin. UDP-alpha-D-glucose contacts are provided by Asp-397 and Gln-398.

This sequence belongs to the UDP-glycosyltransferase family.

The enzyme catalyses oleanolate + UDP-alpha-D-glucose = oleanolate 3-O-beta-D-glucoside + UDP + H(+). Its function is as follows. Catalyzes the transfer of a glucose (Glc) moiety from UDP-Glc to the C-3 position of the oleanane sapogenins oleanolate and hederagenin, and to the C-28 carboxylic group of the lupane sapogenin betulinate. The monoglucosylated hederagenin 3-O-beta-D-glucoside is a feeding deterrent of the yellow-striped flea beetle (Phyllotreta nemorum). The protein is UDP-glycosyltransferase 73C10 of Barbarea vulgaris (Yellow rocket).